A 181-amino-acid polypeptide reads, in one-letter code: Probable pyruvoyl-dependent arginine decarboxylase (181 aa).

Position 43 is a pyruvic acid (Ser) (Ser-43).

This sequence belongs to the PdaD family. Pyruvate is required as a cofactor.

It carries out the reaction L-arginine + H(+) = agmatine + CO2. The protein is Probable pyruvoyl-dependent arginine decarboxylase of Chlorobaculum tepidum (strain ATCC 49652 / DSM 12025 / NBRC 103806 / TLS) (Chlorobium tepidum).